Consider the following 285-residue polypeptide: DNA repair protein RecO (285 aa).

It belongs to the RecO family.

Its function is as follows. Involved in DNA repair and RecF pathway recombination. The protein is DNA repair protein RecO of Synechococcus sp. (strain JA-2-3B'a(2-13)) (Cyanobacteria bacterium Yellowstone B-Prime).